We begin with the raw amino-acid sequence, 294 residues long: 2,4-diacetylphloroglucinol hydrolase (294 aa).

Residues histidine 129, glutamate 160, histidine 270, and glutamate 274 each coordinate Zn(2+).

The protein belongs to the DAPG/phloretin hydrolase family. In terms of assembly, homodimer. Requires Zn(2+) as cofactor.

The enzyme catalyses 2,4-diacetylphloroglucinol + H2O = 2-acetylphloroglucinol + acetate. Specifically and significantly activated by CoCl(2). Competitively inhibited by MAPG, but not by 2-hydroxy- and 4-hydroxyacetophenone. In terms of biological role, hydrolase that specifically degrades the potent antimicrobial compound 2,4-diacetylphloroglucinol (DAPG) to equimolar amounts of mildly toxic monoacetylphloroglucinol (MAPG) and acetate. This is 2,4-diacetylphloroglucinol hydrolase from Pseudomonas sp.